A 129-amino-acid polypeptide reads, in one-letter code: Antileukoproteinase (129 aa).

Residues 1-22 (GRGLLPFVLLALGIXAPWAVEG) form the signal peptide. 2 consecutive WAP domains span residues 25-73 (NALK…LNPV) and 79-127 (VKVK…LTPV). Cystine bridges form between C32–C61, C40–C65, C48–C60, C54–C69, C86–C115, C93–C119, C102–C114, and C108–C123. Residues 81-129 (VKPGKCPVVYGQCMMLNPPNHCKTDSQCLGDLKCCKSMCGKVCLTPVKA) form an elastase inhibitory domain region.

As to quaternary structure, interacts with GRN; interaction protects progranulin from proteolysis. Found in pregnant endometrium and myometrium, placenta, allantoic fluids, fetal cord blood, and fetal liver. Also found in uterus and lung.

It is found in the secreted. Acid-stable proteinase inhibitor with strong affinities for trypsin, chymotrypsin, elastase, and cathepsin G. Modulates the inflammatory and immune responses after bacterial infection, and after infection by the intracellular parasite L.major. Down-regulates responses to bacterial lipopolysaccharide (LPS). Plays a role in regulating the activation of NF-kappa-B and inflammatory responses. Has antimicrobial activity against mycobacteria, but not against salmonella. Contributes to normal resistance against infection by M.tuberculosis. Required for normal resistance to infection by L.major. Required for normal wound healing, probably by preventing tissue damage by limiting protease activity. Together with ELANE, required for normal differentiation and proliferation of bone marrow myeloid cells. The polypeptide is Antileukoproteinase (SLPI) (Sus scrofa (Pig)).